We begin with the raw amino-acid sequence, 155 residues long: SsrA-binding protein (155 aa).

The protein belongs to the SmpB family.

The protein localises to the cytoplasm. Required for rescue of stalled ribosomes mediated by trans-translation. Binds to transfer-messenger RNA (tmRNA), required for stable association of tmRNA with ribosomes. tmRNA and SmpB together mimic tRNA shape, replacing the anticodon stem-loop with SmpB. tmRNA is encoded by the ssrA gene; the 2 termini fold to resemble tRNA(Ala) and it encodes a 'tag peptide', a short internal open reading frame. During trans-translation Ala-aminoacylated tmRNA acts like a tRNA, entering the A-site of stalled ribosomes, displacing the stalled mRNA. The ribosome then switches to translate the ORF on the tmRNA; the nascent peptide is terminated with the 'tag peptide' encoded by the tmRNA and targeted for degradation. The ribosome is freed to recommence translation, which seems to be the essential function of trans-translation. The sequence is that of SsrA-binding protein from Streptococcus pneumoniae serotype 4 (strain ATCC BAA-334 / TIGR4).